Consider the following 160-residue polypeptide: Non-secretory ribonuclease (160 aa).

A signal peptide spans 1-27 (MVPKLFTSPICLLLLLGLMGVEGSLHA). A C-linked (Man) tryptophan glycan is attached at W34. H42 (proton acceptor) is an active-site residue. N44 is a glycosylation site (N-linked (GlcNAc...) asparagine). 4 disulfides stabilise this stretch: C50-C110, C64-C122, C82-C137, and C89-C98. Y60 is modified (3'-nitrotyrosine). 65-69 (KNQNT) lines the substrate pocket. Residues N92, N111, N118, and N138 are each glycosylated (N-linked (GlcNAc...) asparagine). H155 acts as the Proton donor in catalysis.

This sequence belongs to the pancreatic ribonuclease family. Interacts with and forms a tight 1:1 complex with RNH1. Dimerization of two such complexes may occur.

It localises to the lysosome. The protein resides in the cytoplasmic granule. It carries out the reaction an [RNA] containing cytidine + H2O = an [RNA]-3'-cytidine-3'-phosphate + a 5'-hydroxy-ribonucleotide-3'-[RNA].. The enzyme catalyses an [RNA] containing uridine + H2O = an [RNA]-3'-uridine-3'-phosphate + a 5'-hydroxy-ribonucleotide-3'-[RNA].. Functionally, this is a non-secretory ribonuclease. It is a pyrimidine specific nuclease with a slight preference for U. Cytotoxin and helminthotoxin. Possesses a wide variety of biological activities. The protein is Non-secretory ribonuclease (RNASE2) of Chlorocebus aethiops (Green monkey).